The primary structure comprises 445 residues: RNA-binding protein asd-2 (445 aa).

The segment at 22 to 63 is disordered; the sequence is TVIPPPPNDSGHEFIGPSSGPPQVTITPSGVQSGSANGVSTS. Over residues 42–63 the composition is skewed to polar residues; that stretch reads PPQVTITPSGVQSGSANGVSTS. Residues 71–128 form a qua1 domain region; that stretch reads EYLSQLLKDKKQLAAFPNVFHHLERLADEEINKVRVVLFQCEFSKESAPLPDAEGDST. The region spanning 145–171 is the KH domain; it reads NFVGRILGPRGMTAKQLEQETGCKIMV. The segment at 230–253 is qua2 domain; involved in RNA binding; that stretch reads APEGEDDLKRKQLMELAIINGTYR.

In terms of assembly, interacts with sup-12; in the presence of RNA, but with weak affinity in the absence of RNA. Isoform b: Expressed in the hypodermis and pharyngeal muscles. Isoform c: Expressed in body wall muscles and phayngeal muscles.

Its subcellular location is the nucleus. Its function is as follows. RNA-binding protein that binds to the 5'-NACUAAY-N(1,20)-UAAY-3' consensus sequence in pre-mRNA introns to promote alternative splicing. Required for mutually exclusive alternative splicing where it modulates the switch between mutually exclusive exons during pre-mRNA maturation. Involved in muscle-specific gene expression regulating the alternative splicing of genes such as let-2 and unc-60 to ensure that their respective isoforms are expressed in muscle. Promotes the removal of intron 10 from let-2 pre-mRNA to allow for the exclusive expression of the muscle-specific let-2 isoform (as opposed to the non-muscle-specific isoform expressed in embryos) in body wall muscles during late larval and adult stages of development. Binds cooperatively with RNA-binding protein sup-12 to intron 1A of the unc-60 pre-mRNA to promote alternative splicing and expression of the muscle specific isoform of unc-60. The protein is RNA-binding protein asd-2 of Caenorhabditis elegans.